A 194-amino-acid polypeptide reads, in one-letter code: Recombination protein RecR (194 aa).

The C4-type zinc-finger motif lies at 55-70 (CRECGNLAEGELCPIC). Residues 78–171 (SLLAVVESVA…RVTRPAYGLP (94 aa)) form the Toprim domain.

It belongs to the RecR family.

Functionally, may play a role in DNA repair. It seems to be involved in an RecBC-independent recombinational process of DNA repair. It may act with RecF and RecO. The chain is Recombination protein RecR from Thermus thermophilus (strain ATCC BAA-163 / DSM 7039 / HB27).